We begin with the raw amino-acid sequence, 395 residues long: Altered inheritance of mitochondria protein 39, mitochondrial (395 aa).

Residues 156 to 176 traverse the membrane as a helical segment; the sequence is QIWSAIFGGIFGVILGYSLIY.

Belongs to the AIM39 family.

The protein resides in the mitochondrion membrane. The sequence is that of Altered inheritance of mitochondria protein 39, mitochondrial (AIM39) from Saccharomyces cerevisiae (strain ATCC 204508 / S288c) (Baker's yeast).